We begin with the raw amino-acid sequence, 89 residues long: Small cysteine-rich protein 1 (89 aa).

Residues methionine 1–alanine 20 form the signal peptide. A propeptide spanning residues asparagine 21–glutamate 27 is cleaved from the precursor.

It belongs to the Cnidaria small cysteine-rich protein (SCRiP) family. gamma subfamily. Post-translationally, contains 4 disulfide bonds.

The protein localises to the secreted. It is found in the nematocyst. In terms of biological role, induces neurotoxic symptoms on zebrafish. Has also been claimed to be implied in calcification, but tests on homolog proteins suggest that proteins of this family have a neurotoxic function and not a calcification function. This Acropora millepora (Staghorn coral) protein is Small cysteine-rich protein 1.